A 666-amino-acid chain; its full sequence is Fructose-1,6-bisphosphatase class 3 (666 aa).

This sequence belongs to the FBPase class 3 family. It depends on Mn(2+) as a cofactor.

The enzyme catalyses beta-D-fructose 1,6-bisphosphate + H2O = beta-D-fructose 6-phosphate + phosphate. Its pathway is carbohydrate biosynthesis; gluconeogenesis. This chain is Fructose-1,6-bisphosphatase class 3, found in Parabacteroides distasonis (strain ATCC 8503 / DSM 20701 / CIP 104284 / JCM 5825 / NCTC 11152).